Here is a 462-residue protein sequence, read N- to C-terminus: Chromosomal replication initiator protein DnaA (462 aa).

A domain I, interacts with DnaA modulators region spans residues 1-84; that stretch reads MAVSLWQQCI…RFDIGSRPSA (84 aa). The interval 84 to 125 is domain II; the sequence is APRPVQATAAVERPKFEQNTKPAKTSFNVNSPEPAMAANHRS. A domain III, AAA+ region region spans residues 126–342; sequence NINRTYQFEN…GALNRVIANA (217 aa). Residues Gly-170, Gly-172, Lys-173, and Thr-174 each coordinate ATP. A domain IV, binds dsDNA region spans residues 343–462; the sequence is NFTGRPITID…YANLIRTLSS (120 aa).

This sequence belongs to the DnaA family. As to quaternary structure, oligomerizes as a right-handed, spiral filament on DNA at oriC.

It localises to the cytoplasm. Plays an essential role in the initiation and regulation of chromosomal replication. ATP-DnaA binds to the origin of replication (oriC) to initiate formation of the DNA replication initiation complex once per cell cycle. Binds the DnaA box (a 9 base pair repeat at the origin) and separates the double-stranded (ds)DNA. Forms a right-handed helical filament on oriC DNA; dsDNA binds to the exterior of the filament while single-stranded (ss)DNA is stabiized in the filament's interior. The ATP-DnaA-oriC complex binds and stabilizes one strand of the AT-rich DNA unwinding element (DUE), permitting loading of DNA polymerase. After initiation quickly degrades to an ADP-DnaA complex that is not apt for DNA replication. Binds acidic phospholipids. The chain is Chromosomal replication initiator protein DnaA from Shewanella sediminis (strain HAW-EB3).